Reading from the N-terminus, the 131-residue chain is Cystatin-like cysteine protease inhibitor EPIC3 (131 aa).

A signal peptide spans 1–22; it reads MAFTRSIALFAGLALAASSAQG. Asn33 is a glycosylation site (N-linked (GlcNAc...) asparagine). The Secondary area of contact motif lies at 71–75; the sequence is QTVAG.

It belongs to the cystatin family.

It is found in the secreted. Its function is as follows. Secreted effector that interacts with and inhibits host apoplastic pathogenesis-related papain-like cysteine proteases. Inhibition of host proteases by a pathogen extracellular protease inhibitor forms a specific type of defense-counterdefense mechanism between plants and microbial pathogens. The sequence is that of Cystatin-like cysteine protease inhibitor EPIC3 from Phytophthora infestans (strain T30-4) (Potato late blight agent).